The primary structure comprises 233 residues: Ribosomal RNA small subunit methyltransferase G (233 aa).

Residues Gly96, Leu101, 146 to 147 (LE), and Arg160 each bind S-adenosyl-L-methionine.

The protein belongs to the methyltransferase superfamily. RNA methyltransferase RsmG family.

It localises to the cytoplasm. The catalysed reaction is guanosine(527) in 16S rRNA + S-adenosyl-L-methionine = N(7)-methylguanosine(527) in 16S rRNA + S-adenosyl-L-homocysteine. In terms of biological role, specifically methylates the N7 position of guanine in position 527 of 16S rRNA. This is Ribosomal RNA small subunit methyltransferase G from Sphingopyxis alaskensis (strain DSM 13593 / LMG 18877 / RB2256) (Sphingomonas alaskensis).